The sequence spans 131 residues: Universal stress protein C (131 aa).

The protein belongs to the universal stress protein A family.

The protein resides in the cytoplasm. Its function is as follows. Required for resistance to DNA-damaging agents. The chain is Universal stress protein C (uspC) from Salmonella typhi.